Reading from the N-terminus, the 439-residue chain is Histidinol dehydrogenase (439 aa).

The NAD(+) site is built by Tyr-127, Gln-185, and Asn-208. The substrate site is built by Ser-234, Gln-256, and His-259. Zn(2+) is bound by residues Gln-256 and His-259. Catalysis depends on proton acceptor residues Glu-323 and His-324. Residues His-324, Asp-357, Glu-411, and His-416 each coordinate substrate. Position 357 (Asp-357) interacts with Zn(2+). Residue His-416 coordinates Zn(2+).

The protein belongs to the histidinol dehydrogenase family. Zn(2+) serves as cofactor.

It carries out the reaction L-histidinol + 2 NAD(+) + H2O = L-histidine + 2 NADH + 3 H(+). It participates in amino-acid biosynthesis; L-histidine biosynthesis; L-histidine from 5-phospho-alpha-D-ribose 1-diphosphate: step 9/9. Catalyzes the sequential NAD-dependent oxidations of L-histidinol to L-histidinaldehyde and then to L-histidine. The chain is Histidinol dehydrogenase from Aliivibrio fischeri (strain ATCC 700601 / ES114) (Vibrio fischeri).